A 79-amino-acid chain; its full sequence is D-alanyl carrier protein (79 aa).

The 77-residue stretch at 1–77 (MDTKQAVLDI…KIIAKVESLR (77 aa)) folds into the Carrier domain. Ser35 is modified (O-(pantetheine 4'-phosphoryl)serine).

This sequence belongs to the DltC family. Post-translationally, 4'-phosphopantetheine is transferred from CoA to a specific serine of apo-DCP.

Its subcellular location is the cytoplasm. It functions in the pathway cell wall biogenesis; lipoteichoic acid biosynthesis. Its function is as follows. Carrier protein involved in the D-alanylation of lipoteichoic acid (LTA). The loading of thioester-linked D-alanine onto DltC is catalyzed by D-alanine--D-alanyl carrier protein ligase DltA. The DltC-carried D-alanyl group is further transferred to cell membrane phosphatidylglycerol (PG) by forming an ester bond, probably catalyzed by DltD. D-alanylation of LTA plays an important role in modulating the properties of the cell wall in Gram-positive bacteria, influencing the net charge of the cell wall. The protein is D-alanyl carrier protein of Lactobacillus gasseri (strain ATCC 33323 / DSM 20243 / BCRC 14619 / CIP 102991 / JCM 1131 / KCTC 3163 / NCIMB 11718 / NCTC 13722 / AM63).